The following is a 253-amino-acid chain: Phosphoglycerate mutase 2 (253 aa).

T3 is modified (phosphothreonine). Substrate contacts are provided by residues 10 to 17, 23 to 24, R62, 89 to 92, K100, and 116 to 117; these read RHGESSWN, CG, ERHY, and RR. The Tele-phosphohistidine intermediate role is filled by H11. Phosphoserine occurs at positions 14 and 15. E89 acts as the Proton donor/acceptor in catalysis. Phosphoserine is present on S118. Residue T121 is modified to Phosphothreonine. A phosphotyrosine mark is found at Y132 and Y133. Position 135 is a phosphoserine (S135). Position 152 is a phosphothreonine (T152). Substrate is bound at residue 187–188; the sequence is GN.

Belongs to the phosphoglycerate mutase family. BPG-dependent PGAM subfamily. Homodimer. Interacts with ENO1.

It carries out the reaction (2R)-2-phosphoglycerate = (2R)-3-phosphoglycerate. The enzyme catalyses (2R)-3-phospho-glyceroyl phosphate = (2R)-2,3-bisphosphoglycerate + H(+). Interconversion of 3- and 2-phosphoglycerate with 2,3-bisphosphoglycerate as the primer of the reaction. Can also catalyze the reaction of EC 5.4.2.4 (synthase), but with a reduced activity. In Rattus norvegicus (Rat), this protein is Phosphoglycerate mutase 2 (Pgam2).